The chain runs to 147 residues: MKFSTILAIPFAIAFANAAAAPAVTAAPAPAADNPYTIYPPVPKTASINGFADRIYDQIPKCAQECVKQSTSSTPCPYWDTGCLCVIPNFTGAVGNCVASKCRGADVTNFRKLAVGACAAAGVWDPYWIIPASVSSALDAAATATGN.

The first 20 residues, 1–20 (MKFSTILAIPFAIAFANAAA), serve as a signal peptide directing secretion. A CFEM domain is found at 34 to 145 (NPYTIYPPVP…SALDAAATAT (112 aa)). Disulfide bonds link cysteine 62–cysteine 102, cysteine 66–cysteine 97, cysteine 76–cysteine 83, and cysteine 85–cysteine 118. Aspartate 80 lines the heme pocket.

Belongs to the RBT5 family. As to quaternary structure, homodimer. The possibility of a transient honotrimer assembly of the holo protein is not ruled out.

It localises to the secreted. Its function is as follows. Secreted heme-binding protein involved in the utilization of iron from human hemoglobin during hyphal growth. May also play a role in non-hemoglobin iron utilization. Heme transfer occurs between PGA7, RBT5 and CSA2 supporting a model in which the 3 CFEM proteins cooperate in a heme-acquisition system and form a cross-cell wall heme-transfer cascade. The ability to acquire iron from host tissues is a major virulence factor of pathogenic microorganisms. The chain is Secreted hemophore CSA2 (CSA2) from Candida albicans (strain SC5314 / ATCC MYA-2876) (Yeast).